Here is a 180-residue protein sequence, read N- to C-terminus: uncharacterized protein (180 aa).

This is an uncharacterized protein from Methanocaldococcus jannaschii (strain ATCC 43067 / DSM 2661 / JAL-1 / JCM 10045 / NBRC 100440) (Methanococcus jannaschii).